The sequence spans 689 residues: Glycine--tRNA ligase beta subunit (689 aa).

The protein belongs to the class-II aminoacyl-tRNA synthetase family. Tetramer of two alpha and two beta subunits.

The protein localises to the cytoplasm. It catalyses the reaction tRNA(Gly) + glycine + ATP = glycyl-tRNA(Gly) + AMP + diphosphate. This is Glycine--tRNA ligase beta subunit from Shewanella amazonensis (strain ATCC BAA-1098 / SB2B).